Reading from the N-terminus, the 493-residue chain is Galactose-1-phosphate uridylyltransferase (493 aa).

This sequence belongs to the galactose-1-phosphate uridylyltransferase type 2 family.

The protein localises to the cytoplasm. The catalysed reaction is alpha-D-galactose 1-phosphate + UDP-alpha-D-glucose = alpha-D-glucose 1-phosphate + UDP-alpha-D-galactose. It functions in the pathway carbohydrate metabolism; galactose metabolism. The protein is Galactose-1-phosphate uridylyltransferase of Streptococcus pneumoniae (strain CGSP14).